A 93-amino-acid polypeptide reads, in one-letter code: Aspartyl/glutamyl-tRNA(Asn/Gln) amidotransferase subunit C (93 aa).

Belongs to the GatC family. Heterotrimer of A, B and C subunits.

The catalysed reaction is L-glutamyl-tRNA(Gln) + L-glutamine + ATP + H2O = L-glutaminyl-tRNA(Gln) + L-glutamate + ADP + phosphate + H(+). It catalyses the reaction L-aspartyl-tRNA(Asn) + L-glutamine + ATP + H2O = L-asparaginyl-tRNA(Asn) + L-glutamate + ADP + phosphate + 2 H(+). Its function is as follows. Allows the formation of correctly charged Asn-tRNA(Asn) or Gln-tRNA(Gln) through the transamidation of misacylated Asp-tRNA(Asn) or Glu-tRNA(Gln) in organisms which lack either or both of asparaginyl-tRNA or glutaminyl-tRNA synthetases. The reaction takes place in the presence of glutamine and ATP through an activated phospho-Asp-tRNA(Asn) or phospho-Glu-tRNA(Gln). This chain is Aspartyl/glutamyl-tRNA(Asn/Gln) amidotransferase subunit C, found in Methanocella arvoryzae (strain DSM 22066 / NBRC 105507 / MRE50).